We begin with the raw amino-acid sequence, 34 residues long: Mytilin-A (34 aa).

4 disulfide bridges follow: C2/C27, C6/C29, C10/C31, and C15/C34.

It is found in the secreted. In terms of biological role, has antibacterial activity against A.viridans, B.megaterium, M.luteus, E.faecalis, S.aureus and E.coli. It is active against the marine species A.carrageenovora, P.alginovora and C.drobachiensis. The protein is Mytilin-A of Mytilus edulis (Blue mussel).